We begin with the raw amino-acid sequence, 256 residues long: MLIVISPAKNLDYDTPMPKVKTTKAAMLEDSAELIEGLKQLAPQDVSKLMHISDKLGTLNYDRFQSWSLTFTKANARPAVLAFNGDVYVGLDAYSFTDEDFAFAQDHLRILSGLYGALRPLDLMQPYRLEMGTKFANNRGKDLYAFWGSKITDALNKQLKKVGSETVVNLASNEYFKSVKPKALNGEIITPVFKEWKDGKYKIISFFAKKARGLMSAYIIKNKLTQVEQLKSFDWDGYTFNKAMSDGSELVFTRKQ.

This sequence belongs to the UPF0246 family.

In Saccharophagus degradans (strain 2-40 / ATCC 43961 / DSM 17024), this protein is UPF0246 protein Sde_3824.